The chain runs to 792 residues: 5-methyltetrahydropteroyltriglutamate--homocysteine methyltransferase (792 aa).

5-methyltetrahydropteroyltri-L-glutamate-binding positions include 16–19 (RELK) and K112. L-homocysteine contacts are provided by residues 432 to 434 (IGS) and E485. L-methionine contacts are provided by residues 432–434 (IGS) and E485. 5-methyltetrahydropteroyltri-L-glutamate-binding positions include 516–517 (RC) and W562. Residue D600 coordinates L-homocysteine. D600 contacts L-methionine. E606 is a 5-methyltetrahydropteroyltri-L-glutamate binding site. Zn(2+) is bound by residues H642, C644, and E666. The active-site Proton donor is the H695. A Zn(2+)-binding site is contributed by C727.

The protein belongs to the vitamin-B12 independent methionine synthase family. Requires Zn(2+) as cofactor.

It carries out the reaction 5-methyltetrahydropteroyltri-L-glutamate + L-homocysteine = tetrahydropteroyltri-L-glutamate + L-methionine. It participates in amino-acid biosynthesis; L-methionine biosynthesis via de novo pathway; L-methionine from L-homocysteine (MetE route): step 1/1. Functionally, catalyzes the transfer of a methyl group from 5-methyltetrahydrofolate to homocysteine resulting in methionine formation. This is 5-methyltetrahydropteroyltriglutamate--homocysteine methyltransferase from Cupriavidus necator (strain ATCC 17699 / DSM 428 / KCTC 22496 / NCIMB 10442 / H16 / Stanier 337) (Ralstonia eutropha).